The primary structure comprises 353 residues: Terpene synthase 1 (353 aa).

The DDxx(x)D/E motif signature appears at 81 to 86 (DDAIDA). The NDxxSxxxD/E motif motif lies at 222–230 (NDLVSYEKE).

It belongs to the terpene synthase family.

It catalyses the reaction (2E,6E)-farnesyl diphosphate = (2S,3R,6S,9S)-(-)-protoillud-7-ene + diphosphate. In terms of biological role, terpene synthase that converts its substrate farnesyl diphosphate (FPP) into the sesquiterpene protoillud-7-ene. This is Terpene synthase 1 from Tieghemostelium lacteum (Slime mold).